The primary structure comprises 128 residues: Glycine cleavage system H protein (128 aa).

Positions 24–106 (LVRIGISEFA…HGEGWLLIIR (83 aa)) constitute a Lipoyl-binding domain. Residue K65 is modified to N6-lipoyllysine.

It belongs to the GcvH family. In terms of assembly, the glycine cleavage system is composed of four proteins: P, T, L and H. (R)-lipoate serves as cofactor.

The glycine cleavage system catalyzes the degradation of glycine. The H protein shuttles the methylamine group of glycine from the P protein to the T protein. The protein is Glycine cleavage system H protein of Prochlorococcus marinus (strain NATL1A).